The following is a 457-amino-acid chain: UDP-N-acetylmuramate--L-alanine ligase (457 aa).

109–115 (GTDGKTT) is an ATP binding site.

Belongs to the MurCDEF family.

It is found in the cytoplasm. The enzyme catalyses UDP-N-acetyl-alpha-D-muramate + L-alanine + ATP = UDP-N-acetyl-alpha-D-muramoyl-L-alanine + ADP + phosphate + H(+). It participates in cell wall biogenesis; peptidoglycan biosynthesis. Cell wall formation. This Thermotoga neapolitana (strain ATCC 49049 / DSM 4359 / NBRC 107923 / NS-E) protein is UDP-N-acetylmuramate--L-alanine ligase.